The chain runs to 122 residues: Large ribosomal subunit protein uL14c (122 aa).

This sequence belongs to the universal ribosomal protein uL14 family. As to quaternary structure, part of the 50S ribosomal subunit.

It localises to the plastid. It is found in the chloroplast. In terms of biological role, binds to 23S rRNA. This is Large ribosomal subunit protein uL14c from Nicotiana tomentosiformis (Tobacco).